The following is a 224-amino-acid chain: Inner membrane-spanning protein YciB (224 aa).

The next 6 helical transmembrane spans lie at 20–40, 61–81, 86–106, 123–143, 156–176, and 187–207; these read GVNP…FFFA, IFVA…ASWL, LPIM…LTLY, LFGG…GYVF, KLTF…EVVW, and FKVW…MPLI.

The protein belongs to the YciB family.

It is found in the cell inner membrane. In terms of biological role, plays a role in cell envelope biogenesis, maintenance of cell envelope integrity and membrane homeostasis. The sequence is that of Inner membrane-spanning protein YciB from Mesorhizobium japonicum (strain LMG 29417 / CECT 9101 / MAFF 303099) (Mesorhizobium loti (strain MAFF 303099)).